We begin with the raw amino-acid sequence, 331 residues long: Peroxidase 49 (331 aa).

Residues 1–22 form the signal peptide; the sequence is MARLTSFLLLLSLICFVPLCLC. Intrachain disulfides connect cysteine 39-cysteine 119, cysteine 72-cysteine 77, cysteine 125-cysteine 326, and cysteine 204-cysteine 236. Residue histidine 70 is the Proton acceptor of the active site. Ca(2+)-binding residues include aspartate 71, valine 74, glycine 76, aspartate 78, and serine 80. Residue proline 167 coordinates substrate. Asparagine 170 is a glycosylation site (N-linked (GlcNAc...) asparagine). Position 197 (histidine 197) interacts with heme b. A Ca(2+)-binding site is contributed by threonine 198. An N-linked (GlcNAc...) asparagine glycan is attached at asparagine 213. Positions 249, 252, and 257 each coordinate Ca(2+).

Belongs to the peroxidase family. Classical plant (class III) peroxidase subfamily. Heme b serves as cofactor. Requires Ca(2+) as cofactor.

Its subcellular location is the secreted. It catalyses the reaction 2 a phenolic donor + H2O2 = 2 a phenolic radical donor + 2 H2O. Functionally, removal of H(2)O(2), oxidation of toxic reductants, biosynthesis and degradation of lignin, suberization, auxin catabolism, response to environmental stresses such as wounding, pathogen attack and oxidative stress. These functions might be dependent on each isozyme/isoform in each plant tissue. The chain is Peroxidase 49 (PER49) from Arabidopsis thaliana (Mouse-ear cress).